Reading from the N-terminus, the 228-residue chain is uncharacterized protein (228 aa).

The stretch at Val196–Gly228 forms a coiled coil.

This is an uncharacterized protein from Acanthamoeba polyphaga (Amoeba).